Reading from the N-terminus, the 38-residue chain is MKVQASVKKICGSCKVIRRNGVIRVICSAEPRHKQRQG.

The protein belongs to the bacterial ribosomal protein bL36 family.

This is Large ribosomal subunit protein bL36 from Acinetobacter baylyi (strain ATCC 33305 / BD413 / ADP1).